A 152-amino-acid polypeptide reads, in one-letter code: Transcriptional repressor NrdR (152 aa).

A zinc finger spans residues 3–34 (CPHCHHNGSRVIDSRPAEDGMSIRRRRECVNC). The region spanning 49–139 (LLVVKKDGTR…VYRQFKDVDA (91 aa)) is the ATP-cone domain.

It belongs to the NrdR family. Zn(2+) serves as cofactor.

Negatively regulates transcription of bacterial ribonucleotide reductase nrd genes and operons by binding to NrdR-boxes. The polypeptide is Transcriptional repressor NrdR (Limosilactobacillus fermentum (strain NBRC 3956 / LMG 18251) (Lactobacillus fermentum)).